Consider the following 545-residue polypeptide: MAELTINADDVRNALNEFAASYEPGNAERVEVGRVTTASDGIARVEGLPSVMANELLRFEDGTLGLAQNLDVREIGVIILGDFTGIEEGQEVHRTGQVLSVPVGDAFLGRVVDPLGVPIDDLGEIKAETTRALELQAPGVTQRKSVHEPMQTGLKAIDAMIPIGRGQRQLIIGDRQTGKSAIAIDTIINQKANWASGDVTKQVRCIYVAIGQKASTIAAVRQTLEENGALEYTTIVASPASDPAGFKYLAPYAGSAIGQHWMYGGKHVLIVFDDLSKQAEAYRAVSLLLRRPPGREAYPGDVFYLHSRLLERCAKLSDELGAGSMTGLPLIETKANDVSAYIPTNVISITDGQIFLQSDLFNANQRPAVDVGVSVSRVGGAAQVKSMKKVSGTLKLELAQYRDMQAFAMFASDLDAASRQQLTRGARLMELLKQGQYSPFPVEDQVVSIWAGTNGHLDDVPVEDVNRFETEFLEHLKHKSSILTTLAQTNVMDDDTAAALKSSIIDFKKGFFGEGDNHLVGAGHEAHDAISEGEVDQEKIVKQKR.

173–180 contributes to the ATP binding site; the sequence is GDRQTGKS.

This sequence belongs to the ATPase alpha/beta chains family. As to quaternary structure, F-type ATPases have 2 components, CF(1) - the catalytic core - and CF(0) - the membrane proton channel. CF(1) has five subunits: alpha(3), beta(3), gamma(1), delta(1), epsilon(1). CF(0) has three main subunits: a(1), b(2) and c(9-12). The alpha and beta chains form an alternating ring which encloses part of the gamma chain. CF(1) is attached to CF(0) by a central stalk formed by the gamma and epsilon chains, while a peripheral stalk is formed by the delta and b chains.

It is found in the cell membrane. It carries out the reaction ATP + H2O + 4 H(+)(in) = ADP + phosphate + 5 H(+)(out). In terms of biological role, produces ATP from ADP in the presence of a proton gradient across the membrane. The alpha chain is a regulatory subunit. This is ATP synthase subunit alpha from Pseudarthrobacter chlorophenolicus (strain ATCC 700700 / DSM 12829 / CIP 107037 / JCM 12360 / KCTC 9906 / NCIMB 13794 / A6) (Arthrobacter chlorophenolicus).